The following is a 414-amino-acid chain: Voltage-gated ClC-type chloride channel ClcB (414 aa).

The next 11 helical transmembrane spans lie at 5 to 25 (LVIS…FHQA), 54 to 74 (ALTP…YQRY), 116 to 136 (SAIG…SVFA), 147 to 167 (LWVA…PLAG), 169 to 189 (LFIA…PVVI), 220 to 240 (VQYF…PLFL), 255 to 275 (LLPP…SLIF), 292 to 312 (TPPG…AVLA), 327 to 347 (LFVG…WPVL), 353 to 373 (LLMA…APIM), and 381 to 401 (MTGE…ATTI).

Belongs to the chloride channel (TC 2.A.49) family. ClcB subfamily.

It is found in the cell inner membrane. Functionally, probably acts as an electrical shunt for an outwardly-directed proton pump that is linked to amino acid decarboxylation, as part of the extreme acid resistance (XAR) response. In Yersinia pseudotuberculosis serotype O:1b (strain IP 31758), this protein is Voltage-gated ClC-type chloride channel ClcB.